Reading from the N-terminus, the 179-residue chain is Large ribosomal subunit protein uL5 (179 aa).

Belongs to the universal ribosomal protein uL5 family. Part of the 50S ribosomal subunit; part of the 5S rRNA/L5/L18/L25 subcomplex. Contacts the 5S rRNA and the P site tRNA. Forms a bridge to the 30S subunit in the 70S ribosome.

Its function is as follows. This is one of the proteins that bind and probably mediate the attachment of the 5S RNA into the large ribosomal subunit, where it forms part of the central protuberance. In the 70S ribosome it contacts protein S13 of the 30S subunit (bridge B1b), connecting the 2 subunits; this bridge is implicated in subunit movement. Contacts the P site tRNA; the 5S rRNA and some of its associated proteins might help stabilize positioning of ribosome-bound tRNAs. The polypeptide is Large ribosomal subunit protein uL5 (Citrobacter koseri (strain ATCC BAA-895 / CDC 4225-83 / SGSC4696)).